Consider the following 773-residue polypeptide: DNA gyrase subunit B (773 aa).

The Toprim domain occupies 416–530; it reads SEIFLVEGDS…QGHVYIAQAP (115 aa). Mg(2+) contacts are provided by Glu-422, Asp-495, and Asp-497.

The protein belongs to the type II topoisomerase GyrB family. Heterotetramer, composed of two GyrA and two GyrB chains. In the heterotetramer, GyrA contains the active site tyrosine that forms a transient covalent intermediate with DNA, while GyrB binds cofactors and catalyzes ATP hydrolysis. Requires Mg(2+) as cofactor. It depends on Mn(2+) as a cofactor. Ca(2+) serves as cofactor.

The protein resides in the cytoplasm. The enzyme catalyses ATP-dependent breakage, passage and rejoining of double-stranded DNA.. In terms of biological role, a type II topoisomerase that negatively supercoils closed circular double-stranded (ds) DNA in an ATP-dependent manner to modulate DNA topology and maintain chromosomes in an underwound state. Negative supercoiling favors strand separation, and DNA replication, transcription, recombination and repair, all of which involve strand separation. Also able to catalyze the interconversion of other topological isomers of dsDNA rings, including catenanes and knotted rings. Type II topoisomerases break and join 2 DNA strands simultaneously in an ATP-dependent manner. The polypeptide is DNA gyrase subunit B (Helicobacter pylori (strain ATCC 700392 / 26695) (Campylobacter pylori)).